Consider the following 156-residue polypeptide: Transcriptional repressor NrdR (156 aa).

A zinc finger lies at 3–34 (CPYCGHLEDRVVDSRETQDGQATRRRRACLSC). An ATP-cone domain is found at 49 to 139 (PQVVKKDGRR…VYRAFRDVGE (91 aa)).

This sequence belongs to the NrdR family. Requires Zn(2+) as cofactor.

In terms of biological role, negatively regulates transcription of bacterial ribonucleotide reductase nrd genes and operons by binding to NrdR-boxes. The polypeptide is Transcriptional repressor NrdR (Anaeromyxobacter dehalogenans (strain 2CP-C)).